We begin with the raw amino-acid sequence, 470 residues long: MSSGRIVQIIGAVIDVEFPRDSVPAVYDALKVESKGLTLEVQQQLGDGIVRCIAMGSSEGLSRNLEVTGTGAPVSVPVGNETLGRIMDVLGNPIDECGPIGEQERMPIHRKAPAYDELSSTTDLLETGVKVIDLVCPFAKGGKVGLFGGAGVGKTVNMMELINNIALEHSGLSVFAGVGERTREGNDFYHEMQESGVVNVENFKESKVAMVYGQMNEPPGNRLRVALTGLTMAEKFRDEGRDVLLFIDNIYRYTLAGTEVSALLGRMPSAVGYQPTLAEEMGVLQERITSTKTGSITSVQAVYVPADDLTDPSPATTFAHLDSTVVLSRDIAAKGIYPAIDPLDSTSRQLDPLVIGAEHYDVARGVQSVLQRYKELKDIIAILGMDELSEEDKQTVNRARKIERFLSQPFHVAEVFTGAPGKYVPLKDTIAGFKGLLAGDFDHLPEQAFYMVGTIDEAVEKAAKIAGKAA.

ATP is bound at residue 148–155; that stretch reads GGAGVGKT.

It belongs to the ATPase alpha/beta chains family. In terms of assembly, F-type ATPases have 2 components, CF(1) - the catalytic core - and CF(0) - the membrane proton channel. CF(1) has five subunits: alpha(3), beta(3), gamma(1), delta(1), epsilon(1). CF(0) has three main subunits: a(1), b(2) and c(9-12). The alpha and beta chains form an alternating ring which encloses part of the gamma chain. CF(1) is attached to CF(0) by a central stalk formed by the gamma and epsilon chains, while a peripheral stalk is formed by the delta and b chains.

It localises to the cell inner membrane. The enzyme catalyses ATP + H2O + 4 H(+)(in) = ADP + phosphate + 5 H(+)(out). Its function is as follows. Produces ATP from ADP in the presence of a proton gradient across the membrane. The catalytic sites are hosted primarily by the beta subunits. This chain is ATP synthase subunit beta, found in Teredinibacter turnerae (strain ATCC 39867 / T7901).